The sequence spans 396 residues: Tyrosine--tRNA ligase (396 aa).

Positions 43 to 52 (PSSPDIHLGH) match the 'HIGH' region motif. Positions 227–231 (KMSKS) match the 'KMSKS' region motif. An ATP-binding site is contributed by lysine 230. Residues 338-396 (ICVIDFIIKADLAKSKSEARRLLEQGGVEINSAKISDPGTTVKCGDIIKAGKRRYSKAV) form the S4 RNA-binding domain.

It belongs to the class-I aminoacyl-tRNA synthetase family. TyrS type 2 subfamily. Homodimer.

It is found in the cytoplasm. The enzyme catalyses tRNA(Tyr) + L-tyrosine + ATP = L-tyrosyl-tRNA(Tyr) + AMP + diphosphate + H(+). In terms of biological role, catalyzes the attachment of tyrosine to tRNA(Tyr) in a two-step reaction: tyrosine is first activated by ATP to form Tyr-AMP and then transferred to the acceptor end of tRNA(Tyr). The protein is Tyrosine--tRNA ligase of Dehalococcoides mccartyi (strain ATCC BAA-2266 / KCTC 15142 / 195) (Dehalococcoides ethenogenes (strain 195)).